Reading from the N-terminus, the 153-residue chain is Ribosome maturation factor RimP (153 aa).

The protein belongs to the RimP family.

The protein resides in the cytoplasm. Required for maturation of 30S ribosomal subunits. This Clostridioides difficile (strain 630) (Peptoclostridium difficile) protein is Ribosome maturation factor RimP.